The primary structure comprises 144 residues: Putative pre-16S rRNA nuclease (144 aa).

It belongs to the YqgF nuclease family.

The protein resides in the cytoplasm. Functionally, could be a nuclease involved in processing of the 5'-end of pre-16S rRNA. This chain is Putative pre-16S rRNA nuclease, found in Pseudomonas aeruginosa (strain LESB58).